Reading from the N-terminus, the 279-residue chain is HTH-type transcriptional regulator HdfR (279 aa).

Residues 1–58 (MDTELLKTFLEVSRTRHFGRAAESLYLTQSAVSFRIRQLENQLGVNLFTRHRNNIRLT) form the HTH lysR-type domain. Residues 18–37 (FGRAAESLYLTQSAVSFRIR) constitute a DNA-binding region (H-T-H motif).

It belongs to the LysR transcriptional regulatory family.

Negatively regulates the transcription of the flagellar master operon flhDC by binding to the upstream region of the operon. This Escherichia fergusonii (strain ATCC 35469 / DSM 13698 / CCUG 18766 / IAM 14443 / JCM 21226 / LMG 7866 / NBRC 102419 / NCTC 12128 / CDC 0568-73) protein is HTH-type transcriptional regulator HdfR.